The primary structure comprises 327 residues: rRNA 2'-O-methyltransferase fibrillarin (327 aa).

The segment at 1-93 (MKPGFSPRGG…RGNQSGKNVM (93 aa)) is disordered. Gly residues predominate over residues 7–80 (PRGGGFGGRG…GGGRGRGGGR (74 aa)). Asymmetric dimethylarginine is present on residues R8, R15, R21, R24, R28, and R31. Glycyl lysine isopeptide (Lys-Gly) (interchain with G-Cter in SUMO2) cross-links involve residues K90, K108, and K115. An N6-acetyllysine modification is found at K108. S122 bears the Phosphoserine mark. Position 127 is an N6-acetyllysine (K127). A phosphoserine mark is found at S130 and S132. Residues K137, K149, and K164 each participate in a glycyl lysine isopeptide (Lys-Gly) (interchain with G-Cter in SUMO2) cross-link. Residues 178–179 (TT) and 197–198 (EF) each bind S-adenosyl-L-methionine. Residues K211 and K212 each carry the N6-acetyllysine modification. S-adenosyl-L-methionine contacts are provided by residues 222–223 (DA) and 242–245 (DVAQ).

It belongs to the methyltransferase superfamily. Fibrillarin family. Component of box C/D small nucleolar ribonucleoprotein (snoRNP) particles that contain SNU13, FBL, NOP5 and NOP56, plus a guide RNA. It is associated with the U3, U8, U13, X and Y small nuclear RNAs. Component of several ribosomal and nucleolar protein complexes. Part of the small subunit (SSU) processome, composed of more than 70 proteins and the RNA chaperone small nucleolar RNA (snoRNA) U3. Interacts with PRMT5 and UTP20. Interacts with DDX5 and C1QBP. Interacts with NOL11. Interacts with PIH1D1. Interacts with RRP1B. Interacts with NOLC1. Interacts with SDE2. Interacts with NOP2 and NOP56. Post-translationally, ubiquitinated. Ubiquitination leads to proteasomal degradation. Deubiquitinated by USP36. In terms of processing, by homology to other fibrillarins, some or all of the N-terminal domain arginines are modified to asymmetric dimethylarginine (DMA). Acetylated by CREBBP/CBP, preventing methylation of 'Gln-105' of histone H2A (H2AQ104me), without affecting rRNA methylation. Deacetylation by SIRT7 restores methylation of 'Gln-105' of histone H2A (H2AQ104me).

It is found in the nucleus. The protein localises to the nucleolus. The protein resides in the nucleoplasm. The enzyme catalyses L-glutaminyl-[histone H2A] + S-adenosyl-L-methionine = N(5)-methyl-L-glutaminyl-[histone H2A] + S-adenosyl-L-homocysteine + H(+). It catalyses the reaction a ribonucleotide in rRNA + S-adenosyl-L-methionine = a 2'-O-methylribonucleotide in rRNA + S-adenosyl-L-homocysteine + H(+). The catalysed reaction is a ribonucleotide in U6 snRNA + S-adenosyl-L-methionine = a 2'-O-methylribonucleotide in U6 snRNA + S-adenosyl-L-homocysteine + H(+). Functionally, S-adenosyl-L-methionine-dependent methyltransferase that has the ability to methylate both RNAs and proteins. Involved in pre-rRNA processing by catalyzing the site-specific 2'-hydroxyl methylation of ribose moieties in pre-ribosomal RNA. Site specificity is provided by a guide RNA that base pairs with the substrate. Methylation occurs at a characteristic distance from the sequence involved in base pairing with the guide RNA. Probably catalyzes 2'-O-methylation of U6 snRNAs in box C/D RNP complexes. U6 snRNA 2'-O-methylation is required for mRNA splicing fidelity. Also acts as a protein methyltransferase by mediating methylation of 'Gln-105' of histone H2A (H2AQ104me), a modification that impairs binding of the FACT complex and is specifically present at 35S ribosomal DNA locus. Part of the small subunit (SSU) processome, first precursor of the small eukaryotic ribosomal subunit. During the assembly of the SSU processome in the nucleolus, many ribosome biogenesis factors, an RNA chaperone and ribosomal proteins associate with the nascent pre-rRNA and work in concert to generate RNA folding, modifications, rearrangements and cleavage as well as targeted degradation of pre-ribosomal RNA by the RNA exosome. The polypeptide is rRNA 2'-O-methyltransferase fibrillarin (Fbl) (Rattus norvegicus (Rat)).